A 264-amino-acid chain; its full sequence is Electron transfer flavoprotein subunit beta (264 aa).

AMP contacts are provided by residues alanine 6, 36–39 (NEWD), valine 64, 119–122 (GVQS), and 127–130 (YAST).

Heterodimer of an alpha and a beta subunit. Forms a ternary complex with trimethylamine dehydrogenase.

Its function is as follows. Heterodimeric electron transfer flavoprotein that accepts electrons from trimethylamine dehydrogenase. It transfers the electrons to the main respiratory chain via ETF-ubiquinone oxidoreductase (ETF dehydrogenase). EtfB binds an AMP molecule that probably has a purely structural role. The polypeptide is Electron transfer flavoprotein subunit beta (etfB) (Methylophilus methylotrophus (Bacterium W3A1)).